The following is a 695-amino-acid chain: MGKSSEAWCIVLFSVFASFSAEPTMHGEILSPNYPQAYPNEMEKTWDIEVPEGFGVRLYFTHLDMELSENCEYDSVQIISGGVEEGRLCGQRTSKNANSPIVEEFQIPYNKLQVIFRSDFSNEERFTGFAAYYAAIDVNECTDFTDVPCSHFCNNFIGGYFCSCPPEYFLHDDMRNCGVNCSGNVFTALIGEISSPNYPNPYPENSRCEYQILLEEGFQVVVTIQREDFDVEPADSQGNCQDSLLFAAKNRQFGPFCGNGFPGPLTIETHSNTLDIVFQTDLTEQKKGWKLRYHGDPIPCPKEITANSVWAPEKAKYVFKDVVKISCVDGFEAVEGNVGSTFFYSTCQSNGQWSNSRLRCQPVDCGIPEPIQNGKVDDPENTLFGSVIHYSCEEPYYYMEHAEHGGEYRCAANGSWVNDELGIELPKCVPVCGVPTEPFRIQQRIFGGFPAKIQSFPWQVFFEFPRAGGALIGEHWVLTAAHVVEGNSDPSMYVGSTSVRMENLANVQKLTTDRVIIHPGWKPGDDLSTRTNFDNDIALVRLKDPVKMGPTVSPICLPGTSSEYEPSEGDLGLISGWGRTERRNIVIQLRGAKLPVTSLEKCRQVKEENPKARADDYVFTSNMICAGEKGVDSCQGDSGGAFALPVPNVRDPKFYVAGLVSWGKKCGTYGIYTKVKNYKDWILQTMQENSVPSQD.

Positions 1 to 21 (MGKSSEAWCIVLFSVFASFSA) are cleaved as a signal peptide. Residues 22-136 (EPTMHGEILS…TGFAAYYAAI (115 aa)) form the CUB 1 domain. Cystine bridges form between C71-C89, C141-C153, C149-C162, and C164-C177. The 42-residue stretch at 137 to 178 (DVNECTDFTDVPCSHFCNNFIGGYFCSCPPEYFLHDDMRNCG) folds into the EGF-like; calcium-binding domain. Position 155 is a (3R)-3-hydroxyasparagine (N155). N180 is a glycosylation site (N-linked (GlcNAc...) asparagine). Cystine bridges form between C181/C208, C240/C257, C300/C347, C327/C360, C365/C410, and C392/C428. The 116-residue stretch at 181–296 (CSGNVFTALI…KGWKLRYHGD (116 aa)) folds into the CUB 2 domain. Sushi domains follow at residues 298 to 362 (IPCP…RCQP) and 363 to 430 (VDCG…KCVP). N413 is a glycosylation site (N-linked (GlcNAc...) asparagine). In terms of domain architecture, Peptidase S1 spans 445 to 687 (IFGGFPAKIQ…YKDWILQTMQ (243 aa)). Active-site charge relay system residues include H482 and D536. 2 cysteine pairs are disulfide-bonded: C602–C625 and C634–C666. The active-site Charge relay system is S638.

It belongs to the peptidase S1 family. Heterodimer, consisting of heavy and light chains with disulfide bonds. The heavy chain is expected to be a regulatory subunit and the light chain contains the catalytic site. The iron and 2-oxoglutarate dependent 3-hydroxylation of aspartate and asparagine is (R) stereospecific within EGF domains.

It is found in the secreted. It localises to the extracellular space. The protein resides in the extracellular matrix. Capable of degrading extracellular matrix proteins. CASP degrades type I and IV collagen and fibronectin in the presence of calcium. In Mesocricetus auratus (Golden hamster), this protein is Calcium-dependent serine proteinase.